A 434-amino-acid polypeptide reads, in one-letter code: Probable transcription factor HMS1 (434 aa).

The bHLH domain maps to 266 to 341 (TGRVSHNIIE…TKSIEYICHL (76 aa)). The disordered stretch occupies residues 365–434 (HLTEPSQPLS…DMDFNNAGDF (70 aa)). 2 stretches are compositionally biased toward polar residues: residues 368 to 382 (EPSQ…SEQV) and 402 to 423 (PLHN…TNNS).

Interacts with the G1/S-specific cyclin PCL1. Post-translationally, phosphorylated by the cyclin-CDK complex PCL1-PHO85.

The protein resides in the nucleus. Its function is as follows. Involved in exit from mitosis and pseudohyphal differentiation. The polypeptide is Probable transcription factor HMS1 (HMS1) (Saccharomyces cerevisiae (strain ATCC 204508 / S288c) (Baker's yeast)).